The sequence spans 194 residues: tRNA (mnm(5)s(2)U34)-methyltransferase (194 aa).

S-adenosyl-L-methionine is bound by residues His33, Asp34, Asp52, Gln54, Ser79, and His80.

This sequence belongs to the methyltransferase superfamily. MnmM family. Homodimer.

It catalyses the reaction 5-aminomethyl-2-thiouridine(34) in tRNA + S-adenosyl-L-methionine = 5-methylaminomethyl-2-thiouridine(34) in tRNA + S-adenosyl-L-homocysteine + H(+). Its pathway is tRNA modification. In terms of biological role, involved in the biosynthesis of 5-methylaminomethyl-2-thiouridine (mnm(5)s(2)U) at the wobble position (U34) in tRNA. Catalyzes the transfer of a methyl group from S-adenosyl-L-methionine to nm(5)s(2)U34 to form mnm(5)s(2)U34. The protein is tRNA (mnm(5)s(2)U34)-methyltransferase of Bacillus subtilis (strain 168).